The chain runs to 328 residues: MATSFFRRLARSAPITFPVAFGSQSKSGSGAFRFSTGAIAALSGGFSYYYLTSGNNLVYLDQAKEETGPKTALNPDKWLEFKLQDTARVSHNTQLFRFSFDPSAELGLHVASCLLTRAPLGYNAEGKTKYVIRPYTPISDPEAKGYFDLLIKVYPDGKMSQHFASLKPGDVLEVKGPVEKFKYSPNMKKHIGMIAGGSGITPMLQVIDAIVKNPEDNTQISLLYANVSPDDILLKQKLDVLQANHPNLKIFYTVDNPTKNWKGGVGYISKDMALKGLPLPTDDTLILVCGPPGMMEHISGGKAPDWSQGEVKGILKELGYTEEMVFKF.

Residues 76-184 (DKWLEFKLQD…KGPVEKFKYS (109 aa)) form the FAD-binding FR-type domain. Residue T201 is modified to Phosphothreonine.

This sequence belongs to the flavoprotein pyridine nucleotide cytochrome reductase family. The cofactor is FAD.

The protein resides in the mitochondrion. It catalyses the reaction 2 Fe(III)-[cytochrome b5] + NADH = 2 Fe(II)-[cytochrome b5] + NAD(+) + H(+). Its function is as follows. Desaturation and elongation of fatty acids. The protein is NADH-cytochrome b5 reductase-like protein (CBR2) of Arabidopsis thaliana (Mouse-ear cress).